We begin with the raw amino-acid sequence, 59 residues long: Large ribosomal subunit protein uL30 (59 aa).

It belongs to the universal ribosomal protein uL30 family. Part of the 50S ribosomal subunit.

The sequence is that of Large ribosomal subunit protein uL30 from Photorhabdus laumondii subsp. laumondii (strain DSM 15139 / CIP 105565 / TT01) (Photorhabdus luminescens subsp. laumondii).